A 119-amino-acid chain; its full sequence is RIIa domain-containing protein 1 (119 aa).

The RIIa domain occupies 70-104; the sequence is KEVSLLISGFFREMFLKRPDNILEFAAHYFTDPRL.

As to expression, abundant in tissues rich in highly ciliated cells, such as testis, trachea and olfactory epithelium.

This chain is RIIa domain-containing protein 1 (Riiad1), found in Mus musculus (Mouse).